Consider the following 225-residue polypeptide: Cytidylate kinase (225 aa).

11 to 19 (GPAAAGKST) serves as a coordination point for ATP.

This sequence belongs to the cytidylate kinase family. Type 1 subfamily.

The protein resides in the cytoplasm. It carries out the reaction CMP + ATP = CDP + ADP. The catalysed reaction is dCMP + ATP = dCDP + ADP. The sequence is that of Cytidylate kinase from Bacillus pumilus (strain SAFR-032).